The chain runs to 331 residues: Phosphatidylinositol transfer protein 4 (331 aa).

The protein belongs to the PtdIns transfer protein family. PI transfer class IIA subfamily.

Its function is as follows. Catalyzes the transfer of PtdIns and phosphatidylcholine between membranes. This is Phosphatidylinositol transfer protein 4 (pitD) from Dictyostelium discoideum (Social amoeba).